The sequence spans 525 residues: MSLPSSYTALLNDLNRDVARARPADALQFCANWFNSKLEEQRRAHLASNTNFATTNASTPFSHNSVGPSDIVDFGGAAPGLASPTQRASLFHSDPFAPGAGGGALPVASLAVPMDASQSPDSTPAPATPAAPAAPAAPAAPFSSLGGSGSTSISNAAFIPPTFNLGRRTSVSAESMAPSAANAESDGSPLPKTVIPKSEEQMQRIRGSIGNNLLFRNLEQDQYRDVLLAMKEVKVDANVTVIEQGAQGDYFYVVEFGTLDVYVRSPDAVSEGAPSASALLGDKKVSYGPGSSFGELALLYAQPRAATVLSTSACTLWALDRITFRSILMETNSRRRALYEKFLMDVPLFERLSAAERAKISDSLELREYSRGEAVISQGERGSEFFIIVEGDAEVRKTKQGGEEVVGKLSRGDYFGELALLNNAPRAATVAAAGATDDARLRVVTMSERAFTRLLGPLAGILERHAKETYGDEYSAVHANANADAATSVNSAALARSGADTSFPHPMDSSAKPGEGAWSAPNPFA.

The tract at residues 28–213 is dimerization and phosphorylation; the sequence is QFCANWFNSK…RIRGSIGNNL (186 aa). Disordered regions lie at residues 114–146 and 170–196; these read MDASQSPDSTPAPATPAAPAAPAAPAAPFSSLG and SVSAESMAPSAANAESDGSPLPKTVIP. A compositionally biased stretch (low complexity) spans 124 to 146; it reads PAPATPAAPAAPAAPAAPFSSLG. Serine 170 is subject to Phosphoserine; by autocatalysis. A nucleoside 3',5'-cyclic phosphate contacts are provided by residues 214–345 and 348–472; these read LFRN…FLMD and LFER…TYGD. Residues glutamate 295, arginine 304, and glutamate 417 each coordinate 3',5'-cyclic AMP. The interval 497-525 is disordered; the sequence is SGADTSFPHPMDSSAKPGEGAWSAPNPFA.

This sequence belongs to the cAMP-dependent kinase regulatory chain family. Tetramer, composed of 2 regulatory (R) and 2 catalytic (C) subunits. In the presence of cAMP it dissociates into 2 active monomeric C subunits and an R dimer.

This chain is cAMP-dependent protein kinase regulatory subunit (PKAR), found in Mycosarcoma maydis (Corn smut fungus).